A 318-amino-acid polypeptide reads, in one-letter code: Receptor homology region, transmembrane domain- and RING domain-containing protein 5 (318 aa).

Positions 1-20 are cleaved as a signal peptide; it reads MNYSWITIMSLLVICKLASA. The Lumenal segment spans residues 22–163; sequence VVLIGKNTIL…IPGFGISSWS (142 aa). An intrachain disulfide couples Cys-62 to Cys-87. The PA domain maps to 70-143; sequence EKRSKYRSSY…RASGEVLKGY (74 aa). Asn-121 is a glycosylation site (N-linked (GlcNAc...) asparagine). A helical transmembrane segment spans residues 164–184; sequence IMGITFISLLAMSAILATCFV. Residues 185–318 are Cytoplasmic-facing; sequence VRRHQIRQSV…DLPIVVRVYL (134 aa). An RING-type; atypical zinc finger spans residues 233-275; sequence CAICIDDYCVGEKLRILPCKHKYHAVCIDSWLGRCRSFCPVCK.

Its subcellular location is the prevacuolar compartment membrane. The protein resides in the protein storage vacuole membrane. In terms of biological role, involved in the trafficking of vacuolar proteins. May function as a sorting receptor for protein trafficking to the protein storage vacuole (PSV). The chain is Receptor homology region, transmembrane domain- and RING domain-containing protein 5 (RMR5) from Arabidopsis thaliana (Mouse-ear cress).